Consider the following 45-residue polypeptide: Mu-conotoxin-like Cal 12.1.2e (45 aa).

4 disulfide bridges follow: C3–C16, C11–C28, C18–C33, and C27–C39. At W17 the chain carries 6'-bromotryptophan. Residue P23 is modified to 4-hydroxyproline. Residue W38 is modified to 6'-bromotryptophan. P40 carries the 4-hydroxyproline modification.

Expressed by the venom duct.

It is found in the secreted. Its function is as follows. Mu-conotoxins block voltage-gated sodium channels. This toxin reversibly blocks voltage-gated sodium channel in cephalopods, with no alteration in the voltage dependence of sodium conductance or on the kinetics of inactivation. The sequence is that of Mu-conotoxin-like Cal 12.1.2e from Californiconus californicus (California cone).